We begin with the raw amino-acid sequence, 153 residues long: Selenoprotein F (153 aa).

The signal sequence occupies residues 1-19; it reads MAGEVYLLWLLPLLQGLAS. A non-standard amino acid (selenocysteine) is located at residue U84.

The protein belongs to the selenoprotein M/F family. Higher levels in polster, prechordal plate, axis, otic vesicle and somites. Lower levels in fin buds.

It is found in the endoplasmic reticulum lumen. Functionally, may be involved in redox reactions associated with the formation of disulfide bonds. May contribute to the quality control of protein folding in the endoplasmic reticulum. The protein is Selenoprotein F of Danio rerio (Zebrafish).